A 262-amino-acid polypeptide reads, in one-letter code: L-aspartate dehydrogenase (262 aa).

NAD(+) contacts are provided by Ala-128 and Asn-183. His-213 is a catalytic residue.

The protein belongs to the L-aspartate dehydrogenase family.

The catalysed reaction is L-aspartate + NADP(+) + H2O = oxaloacetate + NH4(+) + NADPH + H(+). It carries out the reaction L-aspartate + NAD(+) + H2O = oxaloacetate + NH4(+) + NADH + H(+). Its pathway is cofactor biosynthesis; NAD(+) biosynthesis; iminoaspartate from L-aspartate (dehydrogenase route): step 1/1. In terms of biological role, specifically catalyzes the NAD or NADP-dependent dehydrogenation of L-aspartate to iminoaspartate. In Methanopyrus kandleri (strain AV19 / DSM 6324 / JCM 9639 / NBRC 100938), this protein is L-aspartate dehydrogenase.